The sequence spans 918 residues: Alpha-scruin (918 aa).

6 Kelch repeats span residues 82 to 133 (VVLA…YFHR), 134 to 187 (RVYV…VMDE), 188 to 235 (RIFV…NNEG), 237 to 289 (IYVI…TQNK), 291 to 341 (IWIW…KTGA), and 342 to 390 (HVFI…AIPA). A disordered region spans residues 398–427 (EVPTSTPSSKAKPQPGSKPTSVKYKKQPDI). The IQ domain maps to 430 to 459 (RNEAAKKVQRRWRRYIEQKSITKRMQQGDS). 6 Kelch repeats span residues 590–641 (VIIG…YYRS), 642–695 (AIYI…VFND), 696–743 (VLYA…AHGG), 745–795 (IWLL…VCDN), 797–849 (IWLC…ALES), and 851–898 (LYIA…TIPP).

As to expression, sperm.

Actin bundling protein found in the acrosomal sperm process. This chain is Alpha-scruin, found in Limulus polyphemus (Atlantic horseshoe crab).